The primary structure comprises 360 residues: Mitogen-activated protein kinase 14 (360 aa).

Position 2 is an N-acetylserine (Ser-2). Ser-2 carries the phosphoserine modification. Thr-16 carries the phosphothreonine modification. A Protein kinase domain is found at 24–308 (YQNLSPVGSG…AAQALAHAYF (285 aa)). Residues 30-38 (VGSGAYGSV) and Lys-53 contribute to the ATP site. N6-acetyllysine occurs at positions 53 and 152. Asp-168 serves as the catalytic Proton acceptor. A Phosphothreonine; by MAP2K3, MAP2K4, MAP2K6 and autocatalysis modification is found at Thr-180. The TXY signature appears at 180 to 182 (TGY). Position 182 is a phosphotyrosine; by MAP2K3, MAP2K4, MAP2K6 and autocatalysis (Tyr-182). Residue Thr-263 is modified to Phosphothreonine. At Tyr-323 the chain carries Phosphotyrosine; by ZAP70.

This sequence belongs to the protein kinase superfamily. CMGC Ser/Thr protein kinase family. MAP kinase subfamily. Component of a signaling complex containing at least AKAP13, PKN1, MAPK14, ZAK and MAP2K3. Within this complex, AKAP13 interacts directly with PKN1, which in turn recruits MAPK14, MAP2K3 and ZAK. Binds to a kinase interaction motif within the protein tyrosine phosphatase, PTPRR. This interaction retains MAPK14 in the cytoplasm and prevents nuclear accumulation. Interacts with SPAG9 and GADD45A. Interacts with CDC25B, CDC25C, DUSP1, DUSP10, DUSP16, NP60, SUPT20H and TAB1. Interacts with casein kinase II subunits CSNK2A1 and CSNK2B. Interacts with PPM1D. Interacts with CDK5RAP3; recruits PPM1D to MAPK14 and may regulate its dephosphorylation. Interacts with DUSP2; this interaction does not lead to catalytic activation of DUSP2 and dephosphrylation of MAPK14. It depends on Mg(2+) as a cofactor. In terms of processing, dually phosphorylated on Thr-180 and Tyr-182 by the MAP2Ks MAP2K3/MKK3, MAP2K4/MKK4 and MAP2K6/MKK6 in response to inflammatory citokines, environmental stress or growth factors, which activates the enzyme. Dual phosphorylation can also be mediated by TAB1-mediated autophosphorylation. TCR engagement in T-cells also leads to Tyr-323 phosphorylation by ZAP70. Dephosphorylated and inactivated by DUPS1, DUSP10 and DUSP16. PPM1D also mediates dephosphorylation and inactivation of MAPK14. Post-translationally, acetylated at Lys-53 and Lys-152 by KAT2B and EP300. Acetylation at Lys-53 increases the affinity for ATP and enhances kinase activity. Lys-53 and Lys-152 are deacetylated by HDAC3. Ubiquitinated. Ubiquitination leads to degradation by the proteasome pathway. As to expression, brain, heart, placenta, pancreas and skeletal muscle. Expressed to a lesser extent in lung, liver and kidney.

The protein localises to the cytoplasm. It localises to the nucleus. The enzyme catalyses L-seryl-[protein] + ATP = O-phospho-L-seryl-[protein] + ADP + H(+). It carries out the reaction L-threonyl-[protein] + ATP = O-phospho-L-threonyl-[protein] + ADP + H(+). With respect to regulation, activated by cell stresses such as DNA damage, heat shock, osmotic shock, anisomycin and sodium arsenite, as well as pro-inflammatory stimuli such as bacterial lipopolysaccharide (LPS) and interleukin-1. Activation occurs through dual phosphorylation of Thr-180 and Tyr-182 by either of two dual specificity kinases, MAP2K3/MKK3 or MAP2K6/MKK6, and potentially also MAP2K4/MKK4, as well as by TAB1-mediated autophosphorylation. MAPK14 phosphorylated on both Thr-180 and Tyr-182 is 10-20-fold more active than MAPK14 phosphorylated only on Thr-180, whereas MAPK14 phosphorylated on Tyr-182 alone is inactive. whereas Thr-180 is necessary for catalysis, Tyr-182 may be required for auto-activation and substrate recognition. Phosphorylated at Tyr-323 by ZAP70 in an alternative activation pathway in response to TCR signaling in T-cells. This alternative pathway is inhibited by GADD45A. Inhibited by dual specificity phosphatases, such as DUSP1, DUSP10, and DUSP16. Specifically inhibited by the binding of pyridinyl-imidazole compounds, which are cytokine-suppressive anti-inflammatory drugs (CSAID). Isoform Mxi2 is 100-fold less sensitive to these agents than the other isoforms and is not inhibited by DUSP1. Isoform Exip is not activated by MAP2K6. SB203580 is an inhibitor of MAPK14. Functionally, serine/threonine kinase which acts as an essential component of the MAP kinase signal transduction pathway. MAPK14 is one of the four p38 MAPKs which play an important role in the cascades of cellular responses evoked by extracellular stimuli such as pro-inflammatory cytokines or physical stress leading to direct activation of transcription factors. Accordingly, p38 MAPKs phosphorylate a broad range of proteins and it has been estimated that they may have approximately 200 to 300 substrates each. Some of the targets are downstream kinases which are activated through phosphorylation and further phosphorylate additional targets. RPS6KA5/MSK1 and RPS6KA4/MSK2 can directly phosphorylate and activate transcription factors such as CREB1, ATF1, the NF-kappa-B isoform RELA/NFKB3, STAT1 and STAT3, but can also phosphorylate histone H3 and the nucleosomal protein HMGN1. RPS6KA5/MSK1 and RPS6KA4/MSK2 play important roles in the rapid induction of immediate-early genes in response to stress or mitogenic stimuli, either by inducing chromatin remodeling or by recruiting the transcription machinery. On the other hand, two other kinase targets, MAPKAPK2/MK2 and MAPKAPK3/MK3, participate in the control of gene expression mostly at the post-transcriptional level, by phosphorylating ZFP36 (tristetraprolin) and ELAVL1, and by regulating EEF2K, which is important for the elongation of mRNA during translation. MKNK1/MNK1 and MKNK2/MNK2, two other kinases activated by p38 MAPKs, regulate protein synthesis by phosphorylating the initiation factor EIF4E2. MAPK14 also interacts with casein kinase II, leading to its activation through autophosphorylation and further phosphorylation of TP53/p53. In the cytoplasm, the p38 MAPK pathway is an important regulator of protein turnover. For example, CFLAR is an inhibitor of TNF-induced apoptosis whose proteasome-mediated degradation is regulated by p38 MAPK phosphorylation. In a similar way, MAPK14 phosphorylates the ubiquitin ligase SIAH2, regulating its activity towards EGLN3. MAPK14 may also inhibit the lysosomal degradation pathway of autophagy by interfering with the intracellular trafficking of the transmembrane protein ATG9. Another function of MAPK14 is to regulate the endocytosis of membrane receptors by different mechanisms that impinge on the small GTPase RAB5A. In addition, clathrin-mediated EGFR internalization induced by inflammatory cytokines and UV irradiation depends on MAPK14-mediated phosphorylation of EGFR itself as well as of RAB5A effectors. Ectodomain shedding of transmembrane proteins is regulated by p38 MAPKs as well. In response to inflammatory stimuli, p38 MAPKs phosphorylate the membrane-associated metalloprotease ADAM17. Such phosphorylation is required for ADAM17-mediated ectodomain shedding of TGF-alpha family ligands, which results in the activation of EGFR signaling and cell proliferation. Another p38 MAPK substrate is FGFR1. FGFR1 can be translocated from the extracellular space into the cytosol and nucleus of target cells, and regulates processes such as rRNA synthesis and cell growth. FGFR1 translocation requires p38 MAPK activation. In the nucleus, many transcription factors are phosphorylated and activated by p38 MAPKs in response to different stimuli. Classical examples include ATF1, ATF2, ATF6, ELK1, PTPRH, DDIT3, TP53/p53 and MEF2C and MEF2A. The p38 MAPKs are emerging as important modulators of gene expression by regulating chromatin modifiers and remodelers. The promoters of several genes involved in the inflammatory response, such as IL6, IL8 and IL12B, display a p38 MAPK-dependent enrichment of histone H3 phosphorylation on 'Ser-10' (H3S10ph) in LPS-stimulated myeloid cells. This phosphorylation enhances the accessibility of the cryptic NF-kappa-B-binding sites marking promoters for increased NF-kappa-B recruitment. Phosphorylates CDC25B and CDC25C which is required for binding to 14-3-3 proteins and leads to initiation of a G2 delay after ultraviolet radiation. Phosphorylates TIAR following DNA damage, releasing TIAR from GADD45A mRNA and preventing mRNA degradation. The p38 MAPKs may also have kinase-independent roles, which are thought to be due to the binding to targets in the absence of phosphorylation. Protein O-Glc-N-acylation catalyzed by the OGT is regulated by MAPK14, and, although OGT does not seem to be phosphorylated by MAPK14, their interaction increases upon MAPK14 activation induced by glucose deprivation. This interaction may regulate OGT activity by recruiting it to specific targets such as neurofilament H, stimulating its O-Glc-N-acylation. Required in mid-fetal development for the growth of embryo-derived blood vessels in the labyrinth layer of the placenta. Also plays an essential role in developmental and stress-induced erythropoiesis, through regulation of EPO gene expression. Isoform MXI2 activation is stimulated by mitogens and oxidative stress and only poorly phosphorylates ELK1 and ATF2. Isoform EXIP may play a role in the early onset of apoptosis. Phosphorylates S100A9 at 'Thr-113'. Phosphorylates NLRP1 downstream of MAP3K20/ZAK in response to UV-B irradiation and ribosome collisions, promoting activation of the NLRP1 inflammasome and pyroptosis. (Microbial infection) Activated by phosphorylation by M.tuberculosis EsxA in T-cells leading to inhibition of IFN-gamma production; phosphorylation is apparent within 15 minutes and is inhibited by kinase-specific inhibitors SB203580 and siRNA. This is Mitogen-activated protein kinase 14 from Homo sapiens (Human).